The chain runs to 310 residues: Carbamate kinase 1 (310 aa).

In terms of assembly, homodimer (predominantly) and homotetramer.

It is found in the cytoplasm. It catalyses the reaction hydrogencarbonate + NH4(+) + ATP = carbamoyl phosphate + ADP + H2O + H(+). It functions in the pathway metabolic intermediate metabolism; carbamoyl phosphate degradation; CO(2) and NH(3) from carbamoyl phosphate: step 1/1. Its activity is regulated as follows. Inhibited by adenosine(5')pentaphospho(5')adenosine (Ap5A), Ap6A and to a much lower extent by Ap4A. Functionally, catalyzes the reversible synthesis of carbamate and ATP from carbamoyl phosphate and ADP. Can also catalyze, although with low efficiency, the phosphorylation of bicarbonate, leading to the formation of carboxyphosphate, an unstable intermediate found in the reactions catalyzed by carbamoyl-phosphate synthase and biotin carboxylase. Can also use acetate. This is Carbamate kinase 1 (arcC1) from Enterococcus faecium (Streptococcus faecium).